The sequence spans 242 residues: Venom nerve growth factor 2 (242 aa).

The first 18 residues, methionine 1–alanine 18, serve as a signal peptide directing secretion. Residues alanine 19–arginine 125 constitute a propeptide that is removed on maturation. The segment covering aspartate 47–aspartate 66 has biased composition (basic and acidic residues). Positions aspartate 47–glycine 70 are disordered. 3 disulfides stabilise this stretch: cysteine 139–cysteine 203, cysteine 181–cysteine 231, and cysteine 191–cysteine 233.

The protein belongs to the NGF-beta family. As to quaternary structure, homodimer; non-covalently linked. As to expression, expressed by the venom gland.

It localises to the secreted. Functionally, nerve growth factor is important for the development and maintenance of the sympathetic and sensory nervous systems. It stimulates division and differentiation of sympathetic and embryonic sensory neurons as well as basal forebrain cholinergic neurons in the brain. Its relevance in the snake venom is not clear. However, it has been shown to inhibit metalloproteinase-dependent proteolysis of platelet glycoprotein Ib alpha, suggesting a metalloproteinase inhibition to prevent metalloprotease autodigestion and/or protection against prey proteases. Binds a lipid between the two protein chains in the homodimer. The lipid-bound form promotes histamine relase from mouse mast cells, contrary to the lipid-free form. The protein is Venom nerve growth factor 2 of Pseudechis australis (Mulga snake).